The following is a 255-amino-acid chain: Hydroxyethylthiazole kinase (255 aa).

Met-38 is a binding site for substrate. ATP contacts are provided by Arg-114 and Thr-160. Gly-187 lines the substrate pocket.

The protein belongs to the Thz kinase family. Requires Mg(2+) as cofactor.

The catalysed reaction is 5-(2-hydroxyethyl)-4-methylthiazole + ATP = 4-methyl-5-(2-phosphooxyethyl)-thiazole + ADP + H(+). It functions in the pathway cofactor biosynthesis; thiamine diphosphate biosynthesis; 4-methyl-5-(2-phosphoethyl)-thiazole from 5-(2-hydroxyethyl)-4-methylthiazole: step 1/1. In terms of biological role, catalyzes the phosphorylation of the hydroxyl group of 4-methyl-5-beta-hydroxyethylthiazole (THZ). The protein is Hydroxyethylthiazole kinase of Lysinibacillus sphaericus (strain C3-41).